The primary structure comprises 89 residues: Small ribosomal subunit protein uS15 (89 aa).

Belongs to the universal ribosomal protein uS15 family. As to quaternary structure, part of the 30S ribosomal subunit. Forms a bridge to the 50S subunit in the 70S ribosome, contacting the 23S rRNA.

In terms of biological role, one of the primary rRNA binding proteins, it binds directly to 16S rRNA where it helps nucleate assembly of the platform of the 30S subunit by binding and bridging several RNA helices of the 16S rRNA. Functionally, forms an intersubunit bridge (bridge B4) with the 23S rRNA of the 50S subunit in the ribosome. The chain is Small ribosomal subunit protein uS15 from Agrobacterium fabrum (strain C58 / ATCC 33970) (Agrobacterium tumefaciens (strain C58)).